Here is a 260-residue protein sequence, read N- to C-terminus: UPF0246 protein APJL_0596 (260 aa).

It belongs to the UPF0246 family.

The chain is UPF0246 protein APJL_0596 from Actinobacillus pleuropneumoniae serotype 3 (strain JL03).